Reading from the N-terminus, the 109-residue chain is Thioredoxin (109 aa).

The Thioredoxin domain occupies glutamate 2–lysine 109. Cysteines 27 and 30 form a disulfide.

This sequence belongs to the thioredoxin family.

Functionally, participates in various redox reactions through the reversible oxidation of its active center dithiol to a disulfide and catalyzes dithiol-disulfide exchange reactions. The chain is Thioredoxin (trxA) from Mycoplasmopsis pulmonis (strain UAB CTIP) (Mycoplasma pulmonis).